A 1430-amino-acid polypeptide reads, in one-letter code: MVPNEKSFPRGGTIHSEVKTDDVSLNIVFGASQKKVKKAPKVKENLLSYETEEQNGQLEAFSAETLNMDTLQEDMLVMGVVKELTATALQIALPGRMFARTLVADISDAYTRVAKAAMSGDTSEYHDLTELFQLGRIVYGKAIKTEKLDTGRVSLLLSLKPADVHGNLHHKSIKKGFIFSGAVAEALEHGYVIESGVQGLQAFVPCEKPAQKLHVGQLAFLKVKTVHHDTHQSTCTCVQVEQDQLRIKSQNETNLDYILPGSIVKFKVAKHLKDGLKGSIMNESFSAYVNEHHLANALDTLDAYELNEDYNARVLYVMPLTKLVYLTLNLDIKTGAAVAKDQDEEEQEVEPIKVGSVVEKAKVLRLGSGGVVLLLNKKLKGIISYGSIRGNFKGNYDKDEVLSKYGRKTKHKVRILGYDVIESLYYCSDDPNVVNEKLFCLEDINAGDLVTAKIFKKDDKIKGWSVRIGKVNGILEQFYLAPNVRYDVGQSLKCRVLEVNAERKICYVSNRAEYLGKGIKILTDYASAHVGNVYMGTVVRCEDTYVLVKFGNGIKGVLHRQNLKENSSFFEGQTTKFRILTRNKDQITLTLPEDKFQLGEICPVEITNALDAGLEVKITFAAEDDEEDEDGNPKLEEFVGLIPLRLLSDHLELLHAQMRVHPAGSYTDAACIMQNIFSLRDVPYFSGQLTKDWQSVQVGDIIRSYVKHATDQVVDLMVCVRNYNKPVKVHVKMLRLNAVKNAPVELVPEQLLWVKVLSKEVETKTLTVSAKLTDVWSGDLSDTAKLVEGYLNEVAQIKAGLEEASAPISKYSVGEKINVVFKGIDATTNDWVYTVEGNGKVSALLLSSLVGTAKAPEMGSKHEAVILWIEYSSDVLLISNKKLDIAHISPSGELSTNLIGKAGMKAKVLLKLESVAVCSLKKGTNPLVICPIRLHPNDIENSGSAELRQGDFCNIAFIHDKLHIAVPETVWRLWRGVKRTAGTEVAPVKAKKAKVEESPKQKKTTIEETSAQKKVKAKAKVETKTEAKAIPTKRKAEVVEKITNGQKKTQPLTNGIVKEKPKQNGKLFFEDKTPAKNAKSETPKSNGAEGKSRLPGVSSFWEDDVNQSKEGSSDEDEELNVAETQKNAAKKKRLSAKEKAKAEIKEEQRLREIEERNADPKARLETIDQYERLVIAQPNNSISWLKYIAFLLSNTEIEKARALARRAISTISFRETQELRNMWSALLNMELVYSNNFDDVLKEALNCNDPLEIYISVVDILKKNKRKDRLSSVLTTVLNKFKTELRVWPVAAEAYFWLGKSDQVHNLLQRALRALPNQEHIPCIVSFAKLYAKHDNNDMAQTLLDDVVTSYPKRIDIWSVYVDMLIKAGLIDSARNVLERAVVQKLKPNKMQVIYKKYLQLEENHGTDATVAKVKQQAEQWVKNYAKTVK.

S1 motif domains are found at residues 74–160 (DMLV…LSLK), 176–238 (GFIF…CTCV), 261–329 (GSIV…LTLN), 447–511 (GDLV…VSNR), 531–592 (GNVY…LTLP), and 697–771 (QVGD…VSAK). Residues 1041 to 1145 (KITNGQKKTQ…AKEKAKAEIK (105 aa)) form a disordered region. The segment covering 1043–1053 (TNGQKKTQPLT) has biased composition (polar residues). Composition is skewed to basic and acidic residues over residues 1057-1082 (VKEK…KSET) and 1135-1145 (SAKEKAKAEIK). Positions 1119-1157 (LNVAETQKNAAKKKRLSAKEKAKAEIKEEQRLREIEERN) form a coiled coil. HAT repeat units lie at residues 1161–1193 (KARL…FLLS), 1195–1232 (TEIE…MELV), 1265–1297 (KRKD…AYFW), 1299–1333 (GKSD…LYAK), 1335–1367 (DNND…MLIK), and 1369–1404 (GLID…LEEN).

Its subcellular location is the nucleus. It localises to the nucleolus. Functionally, involved in rRNA processing or maturation during ribosome biogenesis. The protein is rRNA biogenesis protein RRP5 of Drosophila melanogaster (Fruit fly).